A 206-amino-acid chain; its full sequence is Recombination protein RecR (206 aa).

A C4-type zinc finger spans residues 58–73 (CENCHNISDVAVCEIC). The Toprim domain occupies 81-176 (QIVCVVEDVR…ITSSIARGIS (96 aa)).

The protein belongs to the RecR family.

May play a role in DNA repair. It seems to be involved in an RecBC-independent recombinational process of DNA repair. It may act with RecF and RecO. This is Recombination protein RecR from Flavobacterium psychrophilum (strain ATCC 49511 / DSM 21280 / CIP 103535 / JIP02/86).